A 1438-amino-acid chain; its full sequence is DNA polymerase III PolC-type (1438 aa).

The region spanning 422 to 578 is the Exonuclease domain; sequence YVVFDVETTG…YDTEATAYIF (157 aa).

It belongs to the DNA polymerase type-C family. PolC subfamily.

The protein localises to the cytoplasm. It carries out the reaction DNA(n) + a 2'-deoxyribonucleoside 5'-triphosphate = DNA(n+1) + diphosphate. Its function is as follows. Required for replicative DNA synthesis. This DNA polymerase also exhibits 3' to 5' exonuclease activity. The sequence is that of DNA polymerase III PolC-type from Staphylococcus aureus (strain MSSA476).